The primary structure comprises 296 residues: Formamidopyrimidine-DNA glycosylase (296 aa).

Catalysis depends on Pro-2, which acts as the Schiff-base intermediate with DNA. The active-site Proton donor is Glu-3. Lys-58 serves as the catalytic Proton donor; for beta-elimination activity. His-104, Arg-126, and Lys-169 together coordinate DNA. Residues 260 to 296 (SVYDRESQACRTPGCGGTVARIVQAGRSTFYCATCQK) form an FPG-type zinc finger. The active-site Proton donor; for delta-elimination activity is Arg-286.

This sequence belongs to the FPG family. In terms of assembly, monomer. It depends on Zn(2+) as a cofactor.

The enzyme catalyses Hydrolysis of DNA containing ring-opened 7-methylguanine residues, releasing 2,6-diamino-4-hydroxy-5-(N-methyl)formamidopyrimidine.. The catalysed reaction is 2'-deoxyribonucleotide-(2'-deoxyribose 5'-phosphate)-2'-deoxyribonucleotide-DNA = a 3'-end 2'-deoxyribonucleotide-(2,3-dehydro-2,3-deoxyribose 5'-phosphate)-DNA + a 5'-end 5'-phospho-2'-deoxyribonucleoside-DNA + H(+). Involved in base excision repair of DNA damaged by oxidation or by mutagenic agents. Acts as a DNA glycosylase that recognizes and removes damaged bases. Has a preference for oxidized purines, such as 7,8-dihydro-8-oxoguanine (8-oxoG). Has AP (apurinic/apyrimidinic) lyase activity and introduces nicks in the DNA strand. Cleaves the DNA backbone by beta-delta elimination to generate a single-strand break at the site of the removed base with both 3'- and 5'-phosphates. The protein is Formamidopyrimidine-DNA glycosylase of Rhizobium johnstonii (strain DSM 114642 / LMG 32736 / 3841) (Rhizobium leguminosarum bv. viciae).